Here is a 185-residue protein sequence, read N- to C-terminus: Elongation factor P (185 aa).

The protein belongs to the elongation factor P family.

Its subcellular location is the cytoplasm. It functions in the pathway protein biosynthesis; polypeptide chain elongation. Its function is as follows. Involved in peptide bond synthesis. Stimulates efficient translation and peptide-bond synthesis on native or reconstituted 70S ribosomes in vitro. Probably functions indirectly by altering the affinity of the ribosome for aminoacyl-tRNA, thus increasing their reactivity as acceptors for peptidyl transferase. This chain is Elongation factor P, found in Staphylococcus saprophyticus subsp. saprophyticus (strain ATCC 15305 / DSM 20229 / NCIMB 8711 / NCTC 7292 / S-41).